The following is a 188-amino-acid chain: Elongation factor P (188 aa).

The protein belongs to the elongation factor P family.

The protein localises to the cytoplasm. Its pathway is protein biosynthesis; polypeptide chain elongation. Involved in peptide bond synthesis. Stimulates efficient translation and peptide-bond synthesis on native or reconstituted 70S ribosomes in vitro. Probably functions indirectly by altering the affinity of the ribosome for aminoacyl-tRNA, thus increasing their reactivity as acceptors for peptidyl transferase. In Leptospira biflexa serovar Patoc (strain Patoc 1 / Ames), this protein is Elongation factor P.